The following is a 370-amino-acid chain: MASRKLLLLPGDGIGPEAMAEVRKVIAFLNSDLNLGFETEEGLVGGCAYDAHGQAISDADMEKALAADAVLFGAVGGPKWDSVPYEVRPEGGLLRLRKDMQLYANLRPAICYPALAHSSSLKPEVIEGLDILILRELTGGVYFGEPKEIIDLGNGQKRGIDTQVYDTYEIERIADVAFELARTRRNKVTSMEKRNVMKSGVLWNQGVTARHKEKHADVQLEHMLADAGGMQLVRWPKQFDVILTDNLFGDLLSDVAAMLTGSLGMLPSASLGAADSKTGKRKALYEPVHGSAPDIAGKGIANPIAMIASLAMCLRYSFGLVAEADRLEAAIAGVLDDGIRTADIWSEGNTKVGTTEMGDAILAKFKALSA.

An NAD(+)-binding site is contributed by 77–90 (GPKWDSVPYEVRPE). Residues Arg97, Arg107, Arg135, and Asp226 each contribute to the substrate site. Mg(2+) is bound by residues Asp226, Asp250, and Asp254. An NAD(+)-binding site is contributed by 290–302 (GSAPDIAGKGIAN).

Belongs to the isocitrate and isopropylmalate dehydrogenases family. LeuB type 1 subfamily. In terms of assembly, homodimer. Requires Mg(2+) as cofactor. It depends on Mn(2+) as a cofactor.

The protein localises to the cytoplasm. It carries out the reaction (2R,3S)-3-isopropylmalate + NAD(+) = 4-methyl-2-oxopentanoate + CO2 + NADH. Its pathway is amino-acid biosynthesis; L-leucine biosynthesis; L-leucine from 3-methyl-2-oxobutanoate: step 3/4. Catalyzes the oxidation of 3-carboxy-2-hydroxy-4-methylpentanoate (3-isopropylmalate) to 3-carboxy-4-methyl-2-oxopentanoate. The product decarboxylates to 4-methyl-2 oxopentanoate. In Brucella melitensis biotype 1 (strain ATCC 23456 / CCUG 17765 / NCTC 10094 / 16M), this protein is 3-isopropylmalate dehydrogenase.